A 75-amino-acid chain; its full sequence is MVIIPGVRCLSLLFLRRRCPLHIISAFTLLAINALILGHTISPVDLSFTICGYEIKSIFDSETDTIVKFNDIMSQ.

This is an uncharacterized protein from Vaccinia virus (strain Copenhagen) (VACV).